The chain runs to 418 residues: uncharacterized protein (418 aa).

The N-acetyltransferase domain occupies 7–158 (IDVRPIAEAE…TGLDPRWSGP (152 aa)). Acetyl-CoA contacts are provided by residues 87–89 (VTV) and 95–100 (RRGLLT). Residue Tyr128 is the Proton donor of the active site. Phe418 functions as the Proton acceptor; via carboxylate in the catalytic mechanism.

This sequence belongs to the acetyltransferase Eis family. As to quaternary structure, homohexamer; trimer of dimers.

This is an uncharacterized protein from Streptomyces avermitilis (strain ATCC 31267 / DSM 46492 / JCM 5070 / NBRC 14893 / NCIMB 12804 / NRRL 8165 / MA-4680).